A 128-amino-acid chain; its full sequence is Ribosome-binding factor A (128 aa).

This sequence belongs to the RbfA family. In terms of assembly, monomer. Binds 30S ribosomal subunits, but not 50S ribosomal subunits or 70S ribosomes.

It is found in the cytoplasm. Functionally, one of several proteins that assist in the late maturation steps of the functional core of the 30S ribosomal subunit. Associates with free 30S ribosomal subunits (but not with 30S subunits that are part of 70S ribosomes or polysomes). Required for efficient processing of 16S rRNA. May interact with the 5'-terminal helix region of 16S rRNA. This chain is Ribosome-binding factor A, found in Pseudomonas paraeruginosa (strain DSM 24068 / PA7) (Pseudomonas aeruginosa (strain PA7)).